A 482-amino-acid chain; its full sequence is tRNA sulfurtransferase (482 aa).

In terms of domain architecture, THUMP spans 61–165 (LAIRDALTRI…DDRLLLIKGR (105 aa)). ATP is bound by residues 183 to 184 (LI), lysine 265, glycine 287, and glutamine 296. A disulfide bond links cysteine 344 and cysteine 456. The Rhodanese domain occupies 404-482 (FGPNDVILDI…GFNNVKVYRP (79 aa)). Catalysis depends on cysteine 456, which acts as the Cysteine persulfide intermediate.

It belongs to the ThiI family.

Its subcellular location is the cytoplasm. The enzyme catalyses [ThiI sulfur-carrier protein]-S-sulfanyl-L-cysteine + a uridine in tRNA + 2 reduced [2Fe-2S]-[ferredoxin] + ATP + H(+) = [ThiI sulfur-carrier protein]-L-cysteine + a 4-thiouridine in tRNA + 2 oxidized [2Fe-2S]-[ferredoxin] + AMP + diphosphate. It carries out the reaction [ThiS sulfur-carrier protein]-C-terminal Gly-Gly-AMP + S-sulfanyl-L-cysteinyl-[cysteine desulfurase] + AH2 = [ThiS sulfur-carrier protein]-C-terminal-Gly-aminoethanethioate + L-cysteinyl-[cysteine desulfurase] + A + AMP + 2 H(+). The protein operates within cofactor biosynthesis; thiamine diphosphate biosynthesis. In terms of biological role, catalyzes the ATP-dependent transfer of a sulfur to tRNA to produce 4-thiouridine in position 8 of tRNAs, which functions as a near-UV photosensor. Also catalyzes the transfer of sulfur to the sulfur carrier protein ThiS, forming ThiS-thiocarboxylate. This is a step in the synthesis of thiazole, in the thiamine biosynthesis pathway. The sulfur is donated as persulfide by IscS. In Escherichia fergusonii (strain ATCC 35469 / DSM 13698 / CCUG 18766 / IAM 14443 / JCM 21226 / LMG 7866 / NBRC 102419 / NCTC 12128 / CDC 0568-73), this protein is tRNA sulfurtransferase.